Here is a 1114-residue protein sequence, read N- to C-terminus: Lysylphosphatidylglycerol biosynthesis bifunctional protein LysX (1114 aa).

Over residues 1–11 (MSASTETHHAS) the composition is skewed to basic and acidic residues. Positions 1-28 (MSASTETHHASEAAVPTAPRPRPALGSK) are disordered. A phosphatidylglycerol lysyltransferase region spans residues 1–618 (MSASTETHHA…GLHSDGSAPG (618 aa)). The next 6 helical transmembrane spans lie at 38 to 58 (IAGLILGVFSVLVFLWSISPV), 77 to 97 (APDTSLSWALVVALLAAALAS), 101 to 121 (IAWWLLTIYLVLILITNVIVS), 126 to 146 (NVNAMVAAVVQVVLIGILVAA), 164 to 184 (GVLIVGLAIGTLVGWGLVELF), and 219 to 239 (FVNTLLGLFGAMALLAAVITL). Positions 619 to 1114 (EGLAPTATGP…LAFPLAKPRQ (496 aa)) are lysine--tRNA ligase. The OB DNA-binding region spans 674-751 (VRIAGRLLRI…LSLLANEWRM (78 aa)). Residues Asp1025 and Glu1032 each contribute to the Mg(2+) site.

In the N-terminal section; belongs to the LPG synthetase family. The protein in the C-terminal section; belongs to the class-II aminoacyl-tRNA synthetase family. It depends on Mg(2+) as a cofactor.

It is found in the cell membrane. The enzyme catalyses tRNA(Lys) + L-lysine + ATP = L-lysyl-tRNA(Lys) + AMP + diphosphate. It catalyses the reaction L-lysyl-tRNA(Lys) + a 1,2-diacyl-sn-glycero-3-phospho-(1'-sn-glycerol) = a 1,2-diacyl-sn-glycero-3-phospho-1'-(3'-O-L-lysyl)-sn-glycerol + tRNA(Lys). Its function is as follows. Catalyzes the production of L-lysyl-tRNA(Lys)transfer and the transfer of a lysyl group from L-lysyl-tRNA(Lys) to membrane-bound phosphatidylglycerol (PG), which produces lysylphosphatidylglycerol (LPG), one of the components of the bacterial membrane with a positive net charge. LPG synthesis contributes to the resistance to cationic antimicrobial peptides (CAMPs) and likely protects M.tuberculosis against the CAMPs produced by competiting microorganisms (bacteriocins). In fact, the modification of anionic phosphatidylglycerol with positively charged L-lysine results in repulsion of the peptides. In Rhodococcus opacus (strain B4), this protein is Lysylphosphatidylglycerol biosynthesis bifunctional protein LysX (lysX).